Here is a 467-residue protein sequence, read N- to C-terminus: UDP-N-acetylmuramate--L-alanine ligase (467 aa).

114–120 (GTHGKTT) contributes to the ATP binding site.

It belongs to the MurCDEF family.

Its subcellular location is the cytoplasm. It catalyses the reaction UDP-N-acetyl-alpha-D-muramate + L-alanine + ATP = UDP-N-acetyl-alpha-D-muramoyl-L-alanine + ADP + phosphate + H(+). The protein operates within cell wall biogenesis; peptidoglycan biosynthesis. Its function is as follows. Cell wall formation. The protein is UDP-N-acetylmuramate--L-alanine ligase of Bradyrhizobium sp. (strain BTAi1 / ATCC BAA-1182).